The sequence spans 282 residues: MGLAVAKALSLQKDWEIYILDINSERGAETAKELPRTTFHYANVTKYSDLAAAFQSMFQQHGKLDFVFANAGVIERTNFYSTPQAENDMDVCPPPEPDLPSIDADLKGVVFTAYLAQHYFRHSPHRGHGGSLVMTASCGGLYPSFYSPLYSAAKFGVVGFMRSISQHFHASGIRVNAICPGIVRTNLVDSAGWDSFPPGRFIEVETIARLVLQLVDGGEPAGRGLTDTTGRHLPLEELYGVAVEISDSGFYFRDQHTFCDEGMREVMDATVVENQVGAVLNG.

NADP(+)-binding residues include asparagine 23, asparagine 70, tyrosine 150, lysine 154, valine 183, and threonine 185. Tyrosine 150 (proton acceptor) is an active-site residue. The active-site Lowers pKa of active site Tyr is the lysine 154.

This sequence belongs to the short-chain dehydrogenases/reductases (SDR) family.

It functions in the pathway sesquiterpene biosynthesis. Short-chain dehydrogenase/reductase; part of the gene cluster that mediates the biosynthesis of PR-toxin, a bicyclic sesquiterpene belonging to the eremophilane class and acting as a mycotoxin. The first step of the pathway is catalyzed by the aristolochene synthase which performs the cyclization of trans,trans-farnesyl diphosphate (FPP) to the bicyclic sesquiterpene aristolochene. Following the formation of aristolochene, the non-oxygenated aristolochene is converted to the trioxygenated intermediate eremofortin B, via 7-epi-neopetasone. This conversion appears to involve three enzymes, a hydroxysterol oxidase-like enzyme, the quinone-oxidase prx3 that forms the quinone-type-structure in the bicyclic nucleus of aristolochene with the C8-oxo group and the C-3 hydroxyl group, and the P450 monooxygenase prx9 that introduces the epoxide at the double bond between carbons 1 and 2. No monoxy or dioxy-intermediates have been reported to be released to the broth, so these three early oxidative reactions may be coupled together. Eremofortin B is further oxidized by another P450 monooxygenase, that introduces a second epoxide between carbons 7 and 11 prior to acetylation to eremofortin A by the acetyltransferase prx11. The second epoxidation may be performed by a second P450 monooxygenase. After the acetylation step, eremofortin A is converted to eremofortin C and then to PR-toxin. First the conversion of eremofortin A to eremofortin C proceeds by oxidation of the side chain of the molecule at C-12 and is catalyzed by the short-chain oxidoreductase prx1. The cytochrome P450 monooxygenase prx8 also plays a role in this step. The primary alcohol formed at C-12 is finally oxidized by the short-chain alcohol dehydrogenase prx4 that forms PR-toxin. This chain is Short-chain dehydrogenase/reductase prx7, found in Penicillium rubens (strain ATCC 28089 / DSM 1075 / NRRL 1951 / Wisconsin 54-1255) (Penicillium chrysogenum).